Reading from the N-terminus, the 113-residue chain is UPF0482 protein YnfB (113 aa).

An N-terminal signal peptide occupies residues 1–28 (MNYTLSKRLCLTAMLTLAAVVYTTSAFA).

It belongs to the UPF0482 family.

This Salmonella arizonae (strain ATCC BAA-731 / CDC346-86 / RSK2980) protein is UPF0482 protein YnfB.